The following is a 377-amino-acid chain: Glutamate 5-kinase (377 aa).

An ATP-binding site is contributed by lysine 18. Positions 59, 146, and 158 each coordinate substrate. ATP is bound by residues 178-179 and 222-228; these read SD and TGGMATK. One can recognise a PUA domain in the interval 286-363; that stretch reads QGWVTVDAGA…DAIEAELGFT (78 aa).

It belongs to the glutamate 5-kinase family.

The protein localises to the cytoplasm. The catalysed reaction is L-glutamate + ATP = L-glutamyl 5-phosphate + ADP. It participates in amino-acid biosynthesis; L-proline biosynthesis; L-glutamate 5-semialdehyde from L-glutamate: step 1/2. Its function is as follows. Catalyzes the transfer of a phosphate group to glutamate to form L-glutamate 5-phosphate. This Caulobacter vibrioides (strain ATCC 19089 / CIP 103742 / CB 15) (Caulobacter crescentus) protein is Glutamate 5-kinase.